Here is a 419-residue protein sequence, read N- to C-terminus: Endochitinase 2 (419 aa).

Positions 1–18 (MHHLRALVGVGLAGLAAG) are cleaved as a signal peptide. In terms of domain architecture, GH18 spans 35-343 (AQNVVYWGQN…QQAKSILVNG (309 aa)). The N-linked (GlcNAc...) asparagine glycan is linked to N153. Catalysis depends on E173, which acts as the Proton donor. N237 and N256 each carry an N-linked (GlcNAc...) asparagine glycan. Residues 343–390 (GAPCPSSGPPSSTPATAPAPTATTMPSSTSVSSPTASPTGGTVPQWGQ) form a disordered region. Low complexity predominate over residues 355–384 (TPATAPAPTATTMPSSTSVSSPTASPTGGT). A CBM1 domain is found at 383-419 (GTVPQWGQCGGEGYSGPTQCVPPYQCVKQGDWWSSCR).

It belongs to the glycosyl hydrolase 18 family. Chitinase class III subfamily.

It is found in the secreted. The catalysed reaction is Random endo-hydrolysis of N-acetyl-beta-D-glucosaminide (1-&gt;4)-beta-linkages in chitin and chitodextrins.. Functionally, secreted chitinase involved in the degradation of chitin, a component of the cell walls of fungi and exoskeletal elements of some animals (including worms and arthropods). Participates in the infection process and directly acts in the penetration process of the host cuticle. The polypeptide is Endochitinase 2 (chi2) (Metarhizium anisopliae (Entomophthora anisopliae)).